A 250-amino-acid chain; its full sequence is MLLAIDVGNTNTVVGVFEGEHLADSWRVRTDPQATADELVLLYRGLLGEYQVTGVSICSTVPAALRALRRMVVRAFHDIPVVIVEPGTRTGVPILIDNPKEAGADRIMNTLAAHHLYGGPAIVVDFGTSTNLDIVSARGEFIGGIFAPGIEIALDALASRAAQLRKVELVAPRSVIGKSTVEALQSGMIYGVAGQVDGLVRRIRAELDTDAVAIATGGLASVVIKESETLDRHEPHLTLIGLRLVFEKNI.

Residue 6–13 (DVGNTNTV) coordinates ATP. 103–106 (GADR) contributes to the substrate binding site. D105 functions as the Proton acceptor in the catalytic mechanism. Residue D125 coordinates K(+). Position 128 (T128) interacts with ATP. T180 contributes to the substrate binding site.

The protein belongs to the type III pantothenate kinase family. In terms of assembly, homodimer. Requires NH4(+) as cofactor. It depends on K(+) as a cofactor.

Its subcellular location is the cytoplasm. It carries out the reaction (R)-pantothenate + ATP = (R)-4'-phosphopantothenate + ADP + H(+). The protein operates within cofactor biosynthesis; coenzyme A biosynthesis; CoA from (R)-pantothenate: step 1/5. In terms of biological role, catalyzes the phosphorylation of pantothenate (Pan), the first step in CoA biosynthesis. This chain is Type III pantothenate kinase, found in Frankia casuarinae (strain DSM 45818 / CECT 9043 / HFP020203 / CcI3).